We begin with the raw amino-acid sequence, 737 residues long: Fibronectin type III domain-containing protein 7 (737 aa).

Positions 1–25 are cleaved as a signal peptide; sequence MAGRPEKCFSLIRFTLLCLKMVISS. Fibronectin type-III domains are found at residues 28 to 115, 116 to 203, 204 to 288, 289 to 373, 374 to 459, 460 to 544, 545 to 633, and 631 to 715; these read APEI…TVLA, APVL…SPRA, PANI…TVAC, APGR…TAPC, CPND…TAPC, SPEI…TVPC, CPAG…CPLG, and PLGV…YSVT. A glycan (N-linked (GlcNAc...) asparagine) is linked at asparagine 230. Asparagine 433 carries an N-linked (GlcNAc...) asparagine glycan.

It localises to the secreted. The chain is Fibronectin type III domain-containing protein 7 (Fndc7) from Mus musculus (Mouse).